The primary structure comprises 229 residues: Flagellar L-ring protein 1 (229 aa).

The N-terminal stretch at 1–18 (MYLRKISAPLMTMLLLNG) is a signal peptide. Cysteine 19 carries N-palmitoyl cysteine lipidation. Cysteine 19 carries S-diacylglycerol cysteine lipidation.

The protein belongs to the FlgH family. In terms of assembly, the basal body constitutes a major portion of the flagellar organelle and consists of four rings (L,P,S, and M) mounted on a central rod.

It is found in the cell outer membrane. Its subcellular location is the bacterial flagellum basal body. Functionally, assembles around the rod to form the L-ring and probably protects the motor/basal body from shearing forces during rotation. This is Flagellar L-ring protein 1 (flgH1) from Yersinia pseudotuberculosis serotype I (strain IP32953).